We begin with the raw amino-acid sequence, 249 residues long: uncharacterized protein (249 aa).

Positions 30 to 65 form a coiled coil; the sequence is KVDKLKKLEIKKLEDQKKLKEQEEKHRLTLIRLANA. Residues 66–97 are disordered; that stretch reads PPQTNSINNNNNNNNNIKTNRPPLIYGEDKDK.

This is an uncharacterized protein from Dictyostelium discoideum (Social amoeba).